The chain runs to 633 residues: Pescadillo homolog (633 aa).

One can recognise a BRCT domain in the interval 321–414; that stretch reads RLRTLFKGLK…QLLPTNKYFL (94 aa). Disordered stretches follow at residues 450–470 and 490–567; these read HAQS…DTVE and KKYG…LQAR. Residues serine 453 and serine 457 each carry the phosphoserine modification. Composition is skewed to acidic residues over residues 454-470 and 498-526; these read EDES…DTVE and VNED…EELD. Basic and acidic residues predominate over residues 527-538; the sequence is EKEKRLLEEKQK. Residues 545-554 are compositionally biased toward basic residues; it reads KVHKVNKRQV. Over residues 555 to 564 the composition is skewed to basic and acidic residues; that stretch reads HKAEVDEHRL. The stretch at 593 to 626 forms a coiled coil; sequence LLRKKRRTIETDAKEAKKLAKREARKAAAAAAAA.

This sequence belongs to the pescadillo family.

It localises to the nucleus. It is found in the nucleolus. Its subcellular location is the nucleoplasm. Required for maturation of ribosomal RNAs and formation of the large ribosomal subunit. This Drosophila virilis (Fruit fly) protein is Pescadillo homolog.